A 201-amino-acid chain; its full sequence is Large ribosomal subunit protein uL4 (201 aa).

Residues 45–66 form a disordered region; the sequence is AQKSRAEVVGSNKKPWRQKGTG.

This sequence belongs to the universal ribosomal protein uL4 family. In terms of assembly, part of the 50S ribosomal subunit.

Functionally, one of the primary rRNA binding proteins, this protein initially binds near the 5'-end of the 23S rRNA. It is important during the early stages of 50S assembly. It makes multiple contacts with different domains of the 23S rRNA in the assembled 50S subunit and ribosome. In terms of biological role, forms part of the polypeptide exit tunnel. The sequence is that of Large ribosomal subunit protein uL4 from Baumannia cicadellinicola subsp. Homalodisca coagulata.